Here is a 78-residue protein sequence, read N- to C-terminus: UPF0270 protein IL0325 (78 aa).

It belongs to the UPF0270 family.

This Idiomarina loihiensis (strain ATCC BAA-735 / DSM 15497 / L2-TR) protein is UPF0270 protein IL0325.